Consider the following 547-residue polypeptide: MAAKEVKFGDSARKKMLTGVNVLADAVKATLGPKGRNVIIEKSFGAPTITKDGVSVAKEIELKDRFENMGAQLVKDVASRANDDAGDGTTTATVLAQSIVNEGLKAVAAGMNPMDLKRGIDKATIAIVKELKGLSKPCADSKAIAQVGTISANSDNSIGDIIAEAMEKVGKEGVITVEEGSGLENELSVVEGMQFDRGYLSPYFINKPDTMVAELDGPLILLVDKKISNIREMLPVLEAVAKAGRPLLIVAEDVEGEALATLVVNNMRGIVKVAAVKAPGFGDRRKAMLQDIAVLTGGTVISEEIGLSLESTTLEHLGNAKRVILSKENTTIIDGAGVEADIQARVTQIRQQVADTSSDYDREKLQERLAKLSGGVAVIKVGAGSEVEMKEKKARVEDALHATRAAVEEGVVPGGGVALIRALQGINDLKGDNADQDVGIAVLRRAIEAPLRQIVANSGDEPSVVVDKVKQGAGNFGYNAATSEYGDMIEMGILDPTKVTRSALQAASSIGGLILTTEAAVAEIVEDKPAAGGMPDMGGMGGMGGMM.

Residues 30–33 (TLGP), Lys-51, 87–91 (DGTTT), Gly-415, 479–481 (NAA), and Asp-495 contribute to the ATP site.

Belongs to the chaperonin (HSP60) family. In terms of assembly, forms a cylinder of 14 subunits composed of two heptameric rings stacked back-to-back. Interacts with the co-chaperonin GroES.

Its subcellular location is the cytoplasm. The catalysed reaction is ATP + H2O + a folded polypeptide = ADP + phosphate + an unfolded polypeptide.. In terms of biological role, together with its co-chaperonin GroES, plays an essential role in assisting protein folding. The GroEL-GroES system forms a nano-cage that allows encapsulation of the non-native substrate proteins and provides a physical environment optimized to promote and accelerate protein folding. The protein is Chaperonin GroEL of Pseudomonas fluorescens (strain ATCC BAA-477 / NRRL B-23932 / Pf-5).